Here is a 63-residue protein sequence, read N- to C-terminus: Large ribosomal subunit protein bL35 (63 aa).

A disordered region spans residues Met1–Lys22.

This sequence belongs to the bacterial ribosomal protein bL35 family.

The protein is Large ribosomal subunit protein bL35 of Marinobacter nauticus (strain ATCC 700491 / DSM 11845 / VT8) (Marinobacter aquaeolei).